The chain runs to 584 residues: Sodium/calcium exchanger NCL1 (584 aa).

A run of 5 helical transmembrane segments spans residues 77–97 (FLPC…YGFL), 120–140 (LVGG…LVLV), 154–174 (VLIG…LLWG), 215–235 (AARI…PKML), and 245–265 (VLLA…YQVF). EF-hand domains are found at residues 305 to 340 (PNED…INFE) and 345 to 380 (DKND…WLNE). Asp-318, Asp-320, Ser-322, Thr-324, Glu-329, Asp-358, Ser-360, Asn-362, and Glu-369 together coordinate Ca(2+). 5 helical membrane passes run 426 to 446 (WCIT…AAFA), 466 to 486 (FISF…SAII), 504 to 524 (YGGV…LIYI), 531 to 551 (FSSE…FTSF), and 561 to 581 (LVAY…DFVF).

Belongs to the Ca(2+):cation antiporter (CaCA) (TC 2.A.19) family.

The protein resides in the cell membrane. Its function is as follows. May function as a sodium/calcium exchanger (NCX) and participate in the maintenance of calcium homeostasis. May play a role abiotic stress responses. The sequence is that of Sodium/calcium exchanger NCL1 from Oryza sativa subsp. japonica (Rice).